The chain runs to 101 residues: Protein snet-1 (101 aa).

Positions 1 to 20 are cleaved as a signal peptide; sequence MARFTPLLMILLALVPLYYS.

May be degraded by the nep-2 peptidase. As to expression, expressed in coelomocytes, the ASK sensory neurons and interneurons AIB, AIM and PVQ.

Its subcellular location is the secreted. It localises to the perikaryon. Negatively regulates chemotaxis and olfactory plasticity which is the change from positive chemotaxis to dispersal after prolonged exposure to an odorant. May be down-regulated in response to pheromone exposure, resulting in promotion of olfactory plasticity. This chain is Protein snet-1, found in Caenorhabditis elegans.